The chain runs to 441 residues: Cysteine--tRNA ligase (441 aa).

Cysteine 24 serves as a coordination point for Zn(2+). Positions proline 26–asparagine 36 match the 'HIGH' region motif. The Zn(2+) site is built by cysteine 204, histidine 230, and glutamate 234. The short motif at lysine 262–serine 266 is the 'KMSKS' region element. Lysine 265 contributes to the ATP binding site.

It belongs to the class-I aminoacyl-tRNA synthetase family. In terms of assembly, monomer. Zn(2+) is required as a cofactor.

Its subcellular location is the cytoplasm. It catalyses the reaction tRNA(Cys) + L-cysteine + ATP = L-cysteinyl-tRNA(Cys) + AMP + diphosphate. This is Cysteine--tRNA ligase from Mesoplasma florum (strain ATCC 33453 / NBRC 100688 / NCTC 11704 / L1) (Acholeplasma florum).